A 243-amino-acid polypeptide reads, in one-letter code: Probable transcriptional regulatory protein BDI_1233 (243 aa).

The protein belongs to the TACO1 family.

It is found in the cytoplasm. This Parabacteroides distasonis (strain ATCC 8503 / DSM 20701 / CIP 104284 / JCM 5825 / NCTC 11152) protein is Probable transcriptional regulatory protein BDI_1233.